Reading from the N-terminus, the 273-residue chain is Vitamin B12-binding protein (273 aa).

The signal sequence occupies residues 1–18; that stretch reads MMKTLSSLLLLFSVSLQA. The region spanning 23-273 is the Fe/B12 periplasmic-binding domain; it reads RVISLAPHAT…EHFASIEQKR (251 aa). Cys-183 and Cys-263 are joined by a disulfide.

Belongs to the BtuF family. In terms of assembly, the complex is composed of two ATP-binding proteins (BtuD), two transmembrane proteins (BtuC) and a solute-binding protein (BtuF).

It is found in the periplasm. Functionally, part of the ABC transporter complex BtuCDF involved in vitamin B12 import. Binds vitamin B12 and delivers it to the periplasmic surface of BtuC. This Vibrio vulnificus (strain YJ016) protein is Vitamin B12-binding protein.